The sequence spans 205 residues: Potassium-transporting ATPase KdpC subunit (205 aa).

The helical transmembrane segment at 7 to 27 threads the bilayer; the sequence is PAIVILVALTIITGLIYPLAM.

The protein belongs to the KdpC family. In terms of assembly, the system is composed of three essential subunits: KdpA, KdpB and KdpC.

The protein localises to the cell inner membrane. Part of the high-affinity ATP-driven potassium transport (or Kdp) system, which catalyzes the hydrolysis of ATP coupled with the electrogenic transport of potassium into the cytoplasm. This subunit acts as a catalytic chaperone that increases the ATP-binding affinity of the ATP-hydrolyzing subunit KdpB by the formation of a transient KdpB/KdpC/ATP ternary complex. The protein is Potassium-transporting ATPase KdpC subunit of Nitrobacter hamburgensis (strain DSM 10229 / NCIMB 13809 / X14).